Reading from the N-terminus, the 311-residue chain is Lipoyl synthase (311 aa).

Residues Cys55, Cys60, Cys66, Cys81, Cys85, Cys88, and Ser292 each contribute to the [4Fe-4S] cluster site. Positions 67-281 constitute a Radical SAM core domain; it reads WEDREATFLI…ARFAEGLGFA (215 aa).

This sequence belongs to the radical SAM superfamily. Lipoyl synthase family. It depends on [4Fe-4S] cluster as a cofactor.

The protein localises to the cytoplasm. It catalyses the reaction [[Fe-S] cluster scaffold protein carrying a second [4Fe-4S](2+) cluster] + N(6)-octanoyl-L-lysyl-[protein] + 2 oxidized [2Fe-2S]-[ferredoxin] + 2 S-adenosyl-L-methionine + 4 H(+) = [[Fe-S] cluster scaffold protein] + N(6)-[(R)-dihydrolipoyl]-L-lysyl-[protein] + 4 Fe(3+) + 2 hydrogen sulfide + 2 5'-deoxyadenosine + 2 L-methionine + 2 reduced [2Fe-2S]-[ferredoxin]. Its pathway is protein modification; protein lipoylation via endogenous pathway; protein N(6)-(lipoyl)lysine from octanoyl-[acyl-carrier-protein]: step 2/2. Its function is as follows. Catalyzes the radical-mediated insertion of two sulfur atoms into the C-6 and C-8 positions of the octanoyl moiety bound to the lipoyl domains of lipoate-dependent enzymes, thereby converting the octanoylated domains into lipoylated derivatives. The chain is Lipoyl synthase from Mycobacterium bovis (strain ATCC BAA-935 / AF2122/97).